Consider the following 358-residue polypeptide: Mannonate dehydratase (358 aa).

This sequence belongs to the mannonate dehydratase family. Requires Fe(2+) as cofactor. Mn(2+) serves as cofactor.

The enzyme catalyses D-mannonate = 2-dehydro-3-deoxy-D-gluconate + H2O. It participates in carbohydrate metabolism; pentose and glucuronate interconversion. Catalyzes the dehydration of D-mannonate. In Lactococcus lactis subsp. lactis (strain IL1403) (Streptococcus lactis), this protein is Mannonate dehydratase.